A 365-amino-acid chain; its full sequence is Ribosomal RNA large subunit methyltransferase M (365 aa).

Residues serine 194, 227-230 (CPGG), aspartate 246, aspartate 266, and aspartate 284 each bind S-adenosyl-L-methionine. Catalysis depends on lysine 313, which acts as the Proton acceptor.

The protein belongs to the class I-like SAM-binding methyltransferase superfamily. RNA methyltransferase RlmE family. RlmM subfamily. As to quaternary structure, monomer.

Its subcellular location is the cytoplasm. The enzyme catalyses cytidine(2498) in 23S rRNA + S-adenosyl-L-methionine = 2'-O-methylcytidine(2498) in 23S rRNA + S-adenosyl-L-homocysteine + H(+). Functionally, catalyzes the 2'-O-methylation at nucleotide C2498 in 23S rRNA. The polypeptide is Ribosomal RNA large subunit methyltransferase M (Pasteurella multocida (strain Pm70)).